The primary structure comprises 138 residues: Putative pre-16S rRNA nuclease (138 aa).

It belongs to the YqgF nuclease family.

Its subcellular location is the cytoplasm. Could be a nuclease involved in processing of the 5'-end of pre-16S rRNA. This is Putative pre-16S rRNA nuclease from Klebsiella pneumoniae subsp. pneumoniae (strain ATCC 700721 / MGH 78578).